A 475-amino-acid chain; its full sequence is Ribulose bisphosphate carboxylase large chain (475 aa).

Residues 1 to 2 (MS) constitute a propeptide that is removed on maturation. N-acetylproline is present on proline 3. Lysine 14 carries the N6,N6,N6-trimethyllysine modification. The substrate site is built by asparagine 123 and threonine 173. The active-site Proton acceptor is the lysine 175. Lysine 177 provides a ligand contact to substrate. Mg(2+)-binding residues include lysine 201, aspartate 203, and glutamate 204. Residue lysine 201 is modified to N6-carboxylysine. Residue histidine 294 is the Proton acceptor of the active site. 3 residues coordinate substrate: arginine 295, histidine 327, and serine 379.

Belongs to the RuBisCO large chain family. Type I subfamily. As to quaternary structure, heterohexadecamer of 8 large chains and 8 small chains; disulfide-linked. The disulfide link is formed within the large subunit homodimers. The cofactor is Mg(2+). Post-translationally, the disulfide bond which can form in the large chain dimeric partners within the hexadecamer appears to be associated with oxidative stress and protein turnover.

The protein localises to the plastid. The protein resides in the chloroplast. It catalyses the reaction 2 (2R)-3-phosphoglycerate + 2 H(+) = D-ribulose 1,5-bisphosphate + CO2 + H2O. The enzyme catalyses D-ribulose 1,5-bisphosphate + O2 = 2-phosphoglycolate + (2R)-3-phosphoglycerate + 2 H(+). Its function is as follows. RuBisCO catalyzes two reactions: the carboxylation of D-ribulose 1,5-bisphosphate, the primary event in carbon dioxide fixation, as well as the oxidative fragmentation of the pentose substrate in the photorespiration process. Both reactions occur simultaneously and in competition at the same active site. The chain is Ribulose bisphosphate carboxylase large chain from Magnolia macrophylla (Bigleaf magnolia).